Consider the following 340-residue polypeptide: Phenylalanine--tRNA ligase alpha subunit (340 aa).

Glu254 lines the Mg(2+) pocket.

Belongs to the class-II aminoacyl-tRNA synthetase family. Phe-tRNA synthetase alpha subunit type 1 subfamily. Tetramer of two alpha and two beta subunits. Mg(2+) serves as cofactor.

The protein localises to the cytoplasm. It catalyses the reaction tRNA(Phe) + L-phenylalanine + ATP = L-phenylalanyl-tRNA(Phe) + AMP + diphosphate + H(+). In Acidithiobacillus ferrooxidans (strain ATCC 23270 / DSM 14882 / CIP 104768 / NCIMB 8455) (Ferrobacillus ferrooxidans (strain ATCC 23270)), this protein is Phenylalanine--tRNA ligase alpha subunit.